Reading from the N-terminus, the 311-residue chain is Catabolite control protein B (311 aa).

Positions 1–56 (MANIKEIARLANVSVSTVSRVLNHHPYVSEEKRKLVHQVMKELDYTPNRTAIDLIR) constitute an HTH lacI-type domain. Residues 4-23 (IKEIARLANVSVSTVSRVLN) constitute a DNA-binding region (H-T-H motif).

Seems to be complexed to phosphorylated HPr.

In terms of biological role, transcriptional regulator involved in catabolite repression of several operons. This Bacillus subtilis (strain 168) protein is Catabolite control protein B (ccpB).